A 379-amino-acid chain; its full sequence is Cell cycle checkpoint control protein RAD9A (379 aa).

At Y17 the chain carries Phosphotyrosine. Positions 40–80 are possesses 3'-5' exonuclease activity; the sequence is FLFAPLFFQQYQAATPGQDLLRCKILMKSFLSVFRSLAMLE. The sufficient for interaction with ABL1 stretch occupies residues 255–379; that stretch reads SDTDSHSQDL…VLAEDSEGEG (125 aa). A compositionally biased stretch (basic and acidic residues) spans 257 to 271; sequence TDSHSQDLGSPERHQ. Disordered stretches follow at residues 257–289 and 308–379; these read TDSHSQDLGSPERHQPVPQLQAHSIPHPDDFAN and SRVL…EGEG. S261, S266, S317, S330, S363, S368, and S375 each carry phosphoserine.

This sequence belongs to the rad9 family. As to quaternary structure, component of the toroidal 9-1-1 (RAD9-RAD1-HUS1) complex, composed of RAD9A, RAD1 and HUS1. The 9-1-1 complex associates with LIG1, POLB, FEN1, RAD17, HDAC1, RPA1 and RPA2. The 9-1-1 complex associates with the RAD17-RFC complex. RAD9A interacts with BCL2L1, FEN1, RAD9B, ABL1, RPA1, ATAD5 and RPA2. Interacts with DNAJC7. Interacts (when phosphorylated) with TOPBP1. Constitutively phosphorylated on serine and threonine amino acids in absence of DNA damage. Hyperphosphorylated by PRKCD and ABL1 upon DNA damage. Its phosphorylation by PRKCD may be required for the formation of the 9-1-1 complex. Phosphorylated at Ser-330 and Ser-375 by CK2, promoting interaction with TOPBP1.

The protein resides in the nucleus. The catalysed reaction is Exonucleolytic cleavage in the 3'- to 5'-direction to yield nucleoside 5'-phosphates.. Functionally, component of the 9-1-1 cell-cycle checkpoint response complex that plays a major role in DNA repair. The 9-1-1 complex is recruited to DNA lesion upon damage by the RAD17-replication factor C (RFC) clamp loader complex. Acts then as a sliding clamp platform on DNA for several proteins involved in long-patch base excision repair (LP-BER). The 9-1-1 complex stimulates DNA polymerase beta (POLB) activity by increasing its affinity for the 3'-OH end of the primer-template and stabilizes POLB to those sites where LP-BER proceeds; endonuclease FEN1 cleavage activity on substrates with double, nick, or gap flaps of distinct sequences and lengths; and DNA ligase I (LIG1) on long-patch base excision repair substrates. The 9-1-1 complex is necessary for the recruitment of RHNO1 to sites of double-stranded breaks (DSB) occurring during the S phase. RAD9A possesses 3'-&gt;5' double stranded DNA exonuclease activity. In Macaca fascicularis (Crab-eating macaque), this protein is Cell cycle checkpoint control protein RAD9A (RAD9A).